A 53-amino-acid polypeptide reads, in one-letter code: MGMSFSHLLIVLLIIFVLFGAGKLPQVMSDLAKGLKAFKEGMKDDGNDNDKNE.

Residues 1 to 21 (MGMSFSHLLIVLLIIFVLFGA) traverse the membrane as a helical segment.

It belongs to the TatA/E family. In terms of assembly, the Tat system comprises two distinct complexes: a TatABC complex, containing multiple copies of TatA, TatB and TatC subunits, and a separate TatA complex, containing only TatA subunits. Substrates initially bind to the TatABC complex, which probably triggers association of the separate TatA complex to form the active translocon.

It localises to the cell inner membrane. Its function is as follows. Part of the twin-arginine translocation (Tat) system that transports large folded proteins containing a characteristic twin-arginine motif in their signal peptide across membranes. TatA could form the protein-conducting channel of the Tat system. This is Sec-independent protein translocase protein TatA from Rickettsia typhi (strain ATCC VR-144 / Wilmington).